We begin with the raw amino-acid sequence, 177 residues long: Large ribosomal subunit protein uL6 (177 aa).

This sequence belongs to the universal ribosomal protein uL6 family. In terms of assembly, part of the 50S ribosomal subunit.

Functionally, this protein binds to the 23S rRNA, and is important in its secondary structure. It is located near the subunit interface in the base of the L7/L12 stalk, and near the tRNA binding site of the peptidyltransferase center. The protein is Large ribosomal subunit protein uL6 of Cereibacter sphaeroides (strain ATCC 17029 / ATH 2.4.9) (Rhodobacter sphaeroides).